A 32-amino-acid chain; its full sequence is Photosystem I reaction center subunit XII (32 aa).

A helical membrane pass occupies residues Val-9–Tyr-31.

Belongs to the PsaM family.

It is found in the plastid. It localises to the chloroplast thylakoid membrane. The polypeptide is Photosystem I reaction center subunit XII (Chaetosphaeridium globosum (Charophycean green alga)).